The following is a 34-amino-acid chain: Photosystem II reaction center protein T (34 aa).

Residues 3–23 (ALVYTFLLVSTLGIIFFAIFF) form a helical membrane-spanning segment.

Belongs to the PsbT family. In terms of assembly, PSII is composed of 1 copy each of membrane proteins PsbA, PsbB, PsbC, PsbD, PsbE, PsbF, PsbH, PsbI, PsbJ, PsbK, PsbL, PsbM, PsbT, PsbY, PsbZ, Psb30/Ycf12, at least 3 peripheral proteins of the oxygen-evolving complex and a large number of cofactors. It forms dimeric complexes.

Its subcellular location is the plastid. It is found in the chloroplast thylakoid membrane. Found at the monomer-monomer interface of the photosystem II (PS II) dimer, plays a role in assembly and dimerization of PSII. PSII is a light-driven water plastoquinone oxidoreductase, using light energy to abstract electrons from H(2)O, generating a proton gradient subsequently used for ATP formation. The protein is Photosystem II reaction center protein T of Atropa belladonna (Belladonna).